Here is a 183-residue protein sequence, read N- to C-terminus: Adenine phosphoribosyltransferase (183 aa).

It belongs to the purine/pyrimidine phosphoribosyltransferase family. In terms of assembly, homodimer.

The protein resides in the cytoplasm. The catalysed reaction is AMP + diphosphate = 5-phospho-alpha-D-ribose 1-diphosphate + adenine. It functions in the pathway purine metabolism; AMP biosynthesis via salvage pathway; AMP from adenine: step 1/1. Functionally, catalyzes a salvage reaction resulting in the formation of AMP, that is energically less costly than de novo synthesis. The protein is Adenine phosphoribosyltransferase of Klebsiella pneumoniae (strain 342).